The chain runs to 418 residues: Actin-like protein 7B (418 aa).

A disordered region spans residues 1–42 (MATKNSPSPKPMGTAQGDPGEAGTLPAPEAAGIRDTGSTQLK). A Phosphoserine modification is found at Ser8.

This sequence belongs to the actin family. Testis specific.

It localises to the cytoplasm. The protein resides in the cytoskeleton. In Mus musculus (Mouse), this protein is Actin-like protein 7B (Actl7b).